The primary structure comprises 83 residues: Sec-independent protein translocase protein TatA (83 aa).

Residues 1–21 (MGSLSPWHWAILAVVVIVLFG) traverse the membrane as a helical segment. The disordered stretch occupies residues 48–83 (NENKAEASIETPTPVQSQRVDPSAASGQDSTEARPA). Positions 57–77 (ETPTPVQSQRVDPSAASGQDS) are enriched in polar residues.

Belongs to the TatA/E family. As to quaternary structure, the Tat system comprises two distinct complexes: a TatABC complex, containing multiple copies of TatA, TatB and TatC subunits, and a separate TatA complex, containing only TatA subunits. Substrates initially bind to the TatABC complex, which probably triggers association of the separate TatA complex to form the active translocon.

It is found in the cell membrane. In terms of biological role, part of the twin-arginine translocation (Tat) system that transports large folded proteins containing a characteristic twin-arginine motif in their signal peptide across membranes. TatA could form the protein-conducting channel of the Tat system. The protein is Sec-independent protein translocase protein TatA of Mycobacterium bovis (strain BCG / Pasteur 1173P2).